Here is a 249-residue protein sequence, read N- to C-terminus: MDFLAQVKKAVELRLATEPSPPARSLPLVDFSKALGEFGIIAEYKRASPRGVVRLDMPPWAYFAMLQPYAAAFSVLTEPYWFLGDYRFITMAKPFKPVLMKDFVIDNRQIDMAYGYGADAVLIIYRLVGREKAMELAEYAQRLGLTPVVEVDNLQDAKEAATWGGKVMLGINARDLATLEVSLQKAFEIAKALRGDVDFIIESGISKPEEVEKACMLYARGVLVGTALMKNPALIKELRHAAESCVSRR.

Belongs to the TrpC family.

It carries out the reaction 1-(2-carboxyphenylamino)-1-deoxy-D-ribulose 5-phosphate + H(+) = (1S,2R)-1-C-(indol-3-yl)glycerol 3-phosphate + CO2 + H2O. The protein operates within amino-acid biosynthesis; L-tryptophan biosynthesis; L-tryptophan from chorismate: step 4/5. This is Indole-3-glycerol phosphate synthase from Pyrobaculum arsenaticum (strain DSM 13514 / JCM 11321 / PZ6).